A 339-amino-acid polypeptide reads, in one-letter code: Serpentine receptor class alpha-22 (339 aa).

6 helical membrane-spanning segments follow: residues 33 to 53, 110 to 130, 150 to 170, 199 to 219, 250 to 270, and 284 to 304; these read IFIS…IQAL, VVDL…VFSL, FIAI…FYIA, VRTM…YLSV, IFII…NLLL, and IALF…VIYF.

This sequence belongs to the nematode receptor-like protein sra family.

It is found in the membrane. The protein is Serpentine receptor class alpha-22 (sra-22) of Caenorhabditis elegans.